A 419-amino-acid polypeptide reads, in one-letter code: UDP-N-acetylglucosamine 1-carboxyvinyltransferase (419 aa).

A phosphoenolpyruvate-binding site is contributed by Lys22–Asn23. Residue Arg91 participates in UDP-N-acetyl-alpha-D-glucosamine binding. Cys115 acts as the Proton donor in catalysis. Cys115 is subject to 2-(S-cysteinyl)pyruvic acid O-phosphothioketal. UDP-N-acetyl-alpha-D-glucosamine contacts are provided by residues Arg120–Leu124, Lys160–Val163, Asp305, and Val327.

Belongs to the EPSP synthase family. MurA subfamily.

It localises to the cytoplasm. It catalyses the reaction phosphoenolpyruvate + UDP-N-acetyl-alpha-D-glucosamine = UDP-N-acetyl-3-O-(1-carboxyvinyl)-alpha-D-glucosamine + phosphate. The protein operates within cell wall biogenesis; peptidoglycan biosynthesis. In terms of biological role, cell wall formation. Adds enolpyruvyl to UDP-N-acetylglucosamine. This Shigella boydii serotype 18 (strain CDC 3083-94 / BS512) protein is UDP-N-acetylglucosamine 1-carboxyvinyltransferase.